Reading from the N-terminus, the 234-residue chain is ATP-dependent dethiobiotin synthetase BioD (234 aa).

14 to 19 (GVGKTI) contacts ATP. Thr18 serves as a coordination point for Mg(2+). Lys39 is a catalytic residue. Ser43 provides a ligand contact to substrate. Residues Asp56, 118–121 (EGAG), 178–179 (NH), and 208–210 (PWL) contribute to the ATP site. Mg(2+)-binding residues include Asp56 and Glu118.

It belongs to the dethiobiotin synthetase family. As to quaternary structure, homodimer. Requires Mg(2+) as cofactor.

The protein resides in the cytoplasm. The catalysed reaction is (7R,8S)-7,8-diammoniononanoate + CO2 + ATP = (4R,5S)-dethiobiotin + ADP + phosphate + 3 H(+). It participates in cofactor biosynthesis; biotin biosynthesis; biotin from 7,8-diaminononanoate: step 1/2. In terms of biological role, catalyzes a mechanistically unusual reaction, the ATP-dependent insertion of CO2 between the N7 and N8 nitrogen atoms of 7,8-diaminopelargonic acid (DAPA, also called 7,8-diammoniononanoate) to form a ureido ring. This is ATP-dependent dethiobiotin synthetase BioD from Marinobacter nauticus (strain ATCC 700491 / DSM 11845 / VT8) (Marinobacter aquaeolei).